Here is a 95-residue protein sequence, read N- to C-terminus: Co-chaperonin GroES (95 aa).

The protein belongs to the GroES chaperonin family. In terms of assembly, heptamer of 7 subunits arranged in a ring. Interacts with the chaperonin GroEL.

The protein resides in the cytoplasm. In terms of biological role, together with the chaperonin GroEL, plays an essential role in assisting protein folding. The GroEL-GroES system forms a nano-cage that allows encapsulation of the non-native substrate proteins and provides a physical environment optimized to promote and accelerate protein folding. GroES binds to the apical surface of the GroEL ring, thereby capping the opening of the GroEL channel. This Rickettsia felis (strain ATCC VR-1525 / URRWXCal2) (Rickettsia azadi) protein is Co-chaperonin GroES.